The primary structure comprises 78 residues: U7-lycotoxin-Ls1d (78 aa).

The first 22 residues, 1 to 22 (MKLIIFTGLALLLIVSLIDVEA), serve as a signal peptide directing secretion. Residues 23–26 (QNEG) constitute a propeptide that is removed on maturation.

It belongs to the neurotoxin 19 (CSTX) family. 07 (U7-Lctx) subfamily. Contains 4 disulfide bonds. In terms of tissue distribution, expressed by the venom gland.

It localises to the secreted. This is U7-lycotoxin-Ls1d from Lycosa singoriensis (Wolf spider).